The following is a 537-amino-acid chain: Phosphoenolpyruvate carboxykinase (ATP) (537 aa).

Residues Arg64, Tyr204, and Lys210 each contribute to the substrate site. Residues Lys210, His229, and 245–253 contribute to the ATP site; that span reads GLSGTGKTT. The Mn(2+) site is built by Lys210 and His229. Asp266 is a binding site for Mn(2+). ATP is bound by residues Glu294, Arg330, 446-447, and Thr452; that span reads RI. Arg330 is a substrate binding site.

The protein belongs to the phosphoenolpyruvate carboxykinase (ATP) family. Monomer. Mn(2+) serves as cofactor.

It is found in the cytoplasm. It catalyses the reaction oxaloacetate + ATP = phosphoenolpyruvate + ADP + CO2. It functions in the pathway carbohydrate biosynthesis; gluconeogenesis. In terms of biological role, involved in the gluconeogenesis. Catalyzes the conversion of oxaloacetate (OAA) to phosphoenolpyruvate (PEP) through direct phosphoryl transfer between the nucleoside triphosphate and OAA. This is Phosphoenolpyruvate carboxykinase (ATP) from Aliivibrio fischeri (strain ATCC 700601 / ES114) (Vibrio fischeri).